The chain runs to 86 residues: Colicin-E2 immunity protein (86 aa).

This sequence belongs to the colicins ColE2/ColE8/ColE9 and pyocins S1/S2 family.

This protein is able to protect a cell, which harbors the plasmid ColE2 encoding colicin E2, against colicin E2. The polypeptide is Colicin-E2 immunity protein (imm) (Escherichia coli).